Here is a 401-residue protein sequence, read N- to C-terminus: MEKKKVVLAYSGGLDTSVAIKWLQEKNYDIIALCLDLGEGKDLAFVKEKALSVGAIKSYMIDVQEEFANEYALMAMQAHTLYEGKYPLVSALSRPLIAKKLVEIAEQEGATAVAHGCTGKGNDQVRFEVSIQALNPYLEVIAPVREWKWSREEEIAYAKENDVPIPINLDSPFSIDQNLWGRSNECGILEDPWAAPPEDAYEMTLALEDTPNKPEFVEIGFEAGVPTTLNGTAYPLSELIKTLNAFAGKHGVGRIDHVENRLVGIKSREVYECPAAMTLITAHKELEDLTLVKEVAHFKPMIEQKITELIYNGLWFSPLKQALHAFLQETQKNVTGMVRVKLFKGHAIVEGRKSEYSLYDEKLATYTAQDEFNHDAAVGFISLFGLPTKVYSQVNQKKVEA.

9–17 is an ATP binding site; that stretch reads AYSGGLDTS. Tyr86 is an L-citrulline binding site. Gly116 is a binding site for ATP. L-aspartate contacts are provided by Thr118, Asn122, and Asp123. Residue Asn122 participates in L-citrulline binding. Arg126, Ser174, Ser183, Glu259, and Tyr271 together coordinate L-citrulline.

It belongs to the argininosuccinate synthase family. Type 1 subfamily. Homotetramer.

The protein resides in the cytoplasm. It carries out the reaction L-citrulline + L-aspartate + ATP = 2-(N(omega)-L-arginino)succinate + AMP + diphosphate + H(+). It participates in amino-acid biosynthesis; L-arginine biosynthesis; L-arginine from L-ornithine and carbamoyl phosphate: step 2/3. This chain is Argininosuccinate synthase, found in Bacillus cereus (strain AH187).